The sequence spans 185 residues: Ribosome-recycling factor (185 aa).

It belongs to the RRF family.

It is found in the cytoplasm. Its function is as follows. Responsible for the release of ribosomes from messenger RNA at the termination of protein biosynthesis. May increase the efficiency of translation by recycling ribosomes from one round of translation to another. This chain is Ribosome-recycling factor, found in Chromobacterium violaceum (strain ATCC 12472 / DSM 30191 / JCM 1249 / CCUG 213 / NBRC 12614 / NCIMB 9131 / NCTC 9757 / MK).